The following is a 464-amino-acid chain: MTSMSSLFSFTSPAVKRLLGWKQGDEEEKWAEKAVDALVKKLKKKKGAMEDLEKALSSPGQPSKCVTIPRSLDGRLQVSHRKGLPHVIYCRVWRWPDLQSHHELKPLEVCEYPFGSKQKEVCINPYHYKRVESPVLPPVLVPRHSEFNPQHSLLVQFRNLSHNEPHMPLNATFPESFQQHSGGSSFPISPNSPYPPSPASSGTYPNSPASSGPSSPFQLPADTPPPAYMPPDEQMGQDGSQSMETGSSLAPQNMPRGDVQPVEYQEPSHWCSIVYYELNNRVGEAYHASSTSVLVDGFTDPSNNKNRFCLGLLSNVNRNSTIENTRRHIGKGVHLYYVGGEVYAECLSDTSIFVQSRNCNYHHGFHPTTVCKIPSGCSLKIFNNQEFAQLLAQSVNHGFEAVYELTKMCTIRMSFVKGWGAEYHRQDVTSTPCWIEVHLHGPLQWLDKVLTQMGSPLNPISSVS.

The MH1 domain occupies Pro-13–Pro-137. 4 residues coordinate Zn(2+): Cys-65, Cys-110, Cys-122, and His-127. The interval His-166–Asp-258 is disordered. Residues Phe-173–Gly-183 are compositionally biased toward polar residues. The segment covering Ala-199–Pro-216 has biased composition (low complexity). Positions Gln-237–Pro-251 are enriched in polar residues. Residues Trp-270–Ser-464 enclose the MH2 domain.

Belongs to the dwarfin/SMAD family. In terms of assembly, may form trimers with the co-SMAD SMAD4.

It is found in the cytoplasm. Its subcellular location is the nucleus. In terms of biological role, involved in ventralization. May mediate Bmp2b signaling during early phases of embryonic dorsal-ventral pattern formation. Required for initiation of Smad1 expression during gastrulation. This is Mothers against decapentaplegic homolog 5 (smad5) from Danio rerio (Zebrafish).